Consider the following 208-residue polypeptide: Small ribosomal subunit protein uS4 (208 aa).

Residues 98-161 (RRLDNVIYRL…RKMPVIAEAQ (64 aa)) form the S4 RNA-binding domain.

Belongs to the universal ribosomal protein uS4 family. In terms of assembly, part of the 30S ribosomal subunit. Contacts protein S5. The interaction surface between S4 and S5 is involved in control of translational fidelity.

Its function is as follows. One of the primary rRNA binding proteins, it binds directly to 16S rRNA where it nucleates assembly of the body of the 30S subunit. Functionally, with S5 and S12 plays an important role in translational accuracy. In Oleidesulfovibrio alaskensis (strain ATCC BAA-1058 / DSM 17464 / G20) (Desulfovibrio alaskensis), this protein is Small ribosomal subunit protein uS4.